Reading from the N-terminus, the 999-residue chain is Embryonic polarity protein dorsal (999 aa).

The tract at residues 1–44 is disordered; sequence MFPNQNNGAAPGQGPAVDGQQSLNYNGLPAQQQQQLAQSTKNVR. The region spanning 47–342 is the RHD domain; sequence PYVKITEQPA…TFWNLHRHLK (296 aa). Phosphoserine; by PKA is present on Ser-312. Disordered regions lie at residues 389–424 and 670–851; these read FNHEESQQSEPALEQEQSVQQEQYTQEQSLQQEQYT and QARK…SVSG. Residues 402–424 show a composition bias toward low complexity; sequence EQEQSVQQEQYTQEQSLQQEQYT. The Nuclear export signal signature appears at 668–677; it reads NSQARKPETP. Over residues 677–686 the composition is skewed to pro residues; the sequence is PMRPVPPVPP. Residues 710-719 show a composition bias toward basic and acidic residues; it reads KQDSNAENRS. A compositionally biased stretch (polar residues) spans 720 to 734; sequence IEANTVQTKPSTGES. Positions 756 to 773 match the Nuclear localization signal motif; the sequence is KKPGFFSKLFSRRKSKPD. Low complexity-rich tracts occupy residues 819–829 and 836–851; these read SNPAPAKSSPV and SKLTKPVGRSVSSVSG.

In terms of assembly, interacts with tamo via the nuclear localization signal. Interacts with emb, a component of the nuclear export complex. In terms of tissue distribution, in unchallenged larvae, expression of both isoforms is seen in fat body and gut (isoform A is more abundant). After immune challenge levels of both isoforms are enhanced.

It is found in the cytoplasm. The protein localises to the nucleus. In terms of biological role, embryonic developmental transcription factor. The lateral or ventral identity of a cell depends upon the concentration of this protein in its nucleus during the blastoderm stage. Acts as a morphogenetic transcription factor that specifically binds to the kappa-B-related consensus sequence 5'-GRGAAAANCC-3', located in the enhancer region of zygotic genes such as Zen, Twist, Snail and Decapentaplegic, promoting their expression. Part of a signaling pathway involving NF-kappa-B and Toll-related receptors, that functions in the apoptosis of unfit cells during cell competition. Mediates an immune response in larvae. May be part of a NF-kappa-B and Tollo signaling cascade that regulates development of the peripheral nervous system. The sequence is that of Embryonic polarity protein dorsal (dl) from Drosophila melanogaster (Fruit fly).